The sequence spans 614 residues: UvrABC system protein C (614 aa).

The GIY-YIG domain occupies 26-104; that stretch reads NLPGVYKMLG…IKEHRPPYNV (79 aa). A UVR domain is found at 215 to 250; the sequence is SDIHTTLIEKMEHSAEALDFEKAAFYRDQLSMLREV.

This sequence belongs to the UvrC family. Interacts with UvrB in an incision complex.

It localises to the cytoplasm. Its function is as follows. The UvrABC repair system catalyzes the recognition and processing of DNA lesions. UvrC both incises the 5' and 3' sides of the lesion. The N-terminal half is responsible for the 3' incision and the C-terminal half is responsible for the 5' incision. This Psychrobacter sp. (strain PRwf-1) protein is UvrABC system protein C.